The sequence spans 126 residues: Prefoldin subunit beta (126 aa).

Belongs to the prefoldin subunit beta family. In terms of assembly, heterohexamer of two alpha and four beta subunits.

It localises to the cytoplasm. Molecular chaperone capable of stabilizing a range of proteins. Seems to fulfill an ATP-independent, HSP70-like function in archaeal de novo protein folding. The protein is Prefoldin subunit beta (pfdB) of Pyrobaculum aerophilum (strain ATCC 51768 / DSM 7523 / JCM 9630 / CIP 104966 / NBRC 100827 / IM2).